The primary structure comprises 446 residues: Tetratricopeptide repeat protein 23 (446 aa).

TPR repeat units follow at residues 45–78 (LHLC…TKIC), 137–170 (LELF…SKEM), 186–219 (SRIK…TETT), and 356–389 (AETY…ETFL).

As to quaternary structure, associated with the EvC complex composed of EFCAB7, IQCE, EVC2 and EVC.

Its subcellular location is the cell projection. The protein resides in the cilium. Its function is as follows. Participates positively in the ciliary Hedgehog (Hh) signaling. This chain is Tetratricopeptide repeat protein 23 (Ttc23), found in Rattus norvegicus (Rat).